The primary structure comprises 1088 residues: PAN2-PAN3 deadenylation complex catalytic subunit pan2 (1088 aa).

WD repeat units lie at residues 16 to 56 (VSTC…YTQF), 136 to 175 (HKDK…PVNK), 178 to 224 (AHTG…SLVP), and 270 to 309 (PLTS…SFSD). Residues 309 to 443 (DLKLPIQLPN…EDTISGPDSI (135 aa)) are linker. The USP domain occupies 443 to 814 (IPKFYQRPVI…IPIIVYYEKL (372 aa)). The 174-residue stretch at 860–1033 (VGIDSEFVAL…EDALTALKLY (174 aa)) folds into the Exonuclease domain. A divalent metal cation-binding residues include aspartate 863, glutamate 865, aspartate 972, and aspartate 1025.

Belongs to the peptidase C19 family. PAN2 subfamily. As to quaternary structure, forms a heterotrimer with an asymmetric homodimer of the regulatory subunit ppk26/pan3 to form the poly(A)-nuclease (PAN) deadenylation complex. The cofactor is a divalent metal cation.

It is found in the cytoplasm. It carries out the reaction Exonucleolytic cleavage of poly(A) to 5'-AMP.. Its activity is regulated as follows. Positively regulated by the regulatory subunit ppk26/pan3. Catalytic subunit of the poly(A)-nuclease (PAN) deadenylation complex, one of two cytoplasmic mRNA deadenylases involved in mRNA turnover. PAN specifically shortens poly(A) tails of RNA and the activity is stimulated by poly(A)-binding protein pab1. PAN deadenylation is followed by rapid degradation of the shortened mRNA tails by the CCR4-NOT complex. Deadenylated mRNAs are then degraded by two alternative mechanisms, namely exosome-mediated 3'-5' exonucleolytic degradation, or deadenylation-dependent mRNA decaping and subsequent 5'-3' exonucleolytic degradation by xrn1. May also be involved in post-transcriptional maturation of mRNA poly(A) tails. In Schizosaccharomyces pombe (strain 972 / ATCC 24843) (Fission yeast), this protein is PAN2-PAN3 deadenylation complex catalytic subunit pan2.